Here is a 130-residue protein sequence, read N- to C-terminus: uncharacterized protein (130 aa).

This is an uncharacterized protein from Schizosaccharomyces pombe (strain 972 / ATCC 24843) (Fission yeast).